The following is a 416-amino-acid chain: Notoamide biosynthesis cluster protein N' (416 aa).

The first 16 residues, 1–16 (MRAALLTLAFTALAAA), serve as a signal peptide directing secretion. N-linked (GlcNAc...) asparagine glycosylation is found at asparagine 119 and asparagine 262.

Functionally, part of the gene cluster that mediates the biosynthesis of notoamide, a fungal indole alkaloid that belongs to a family of natural products containing a characteristic bicyclo[2.2.2]diazaoctane core. The first step of notoamide biosynthesis involves coupling of L-proline and L-tryptophan by the bimodular NRPS notE', to produce cyclo-L-tryptophan-L-proline called brevianamide F. The reverse prenyltransferase notF' then acts as a deoxybrevianamide E synthase and converts brevianamide F to deoxybrevianamide E via reverse prenylation at C-2 of the indole ring leading to the bicyclo[2.2.2]diazaoctane core. Deoxybrevianamide E is further hydroxylated at C-6 of the indole ring, likely catalyzed by the cytochrome P450 monooxygenase notG', to yield 6-hydroxy-deoxybrevianamide E. 6-hydroxy-deoxybrevianamide E is a specific substrate of the prenyltransferase notC' for normal prenylation at C-7 to produce 6-hydroxy-7-prenyl-deoxybrevianamide, also called notoamide S. As the proposed pivotal branching point in notoamide biosynthesis, notoamide S can be diverted to notoamide E through an oxidative pyran ring closure putatively catalyzed by either notH' cytochrome P450 monooxygenase or the notD' FAD-linked oxidoreductase. This step would be followed by an indole 2,3-epoxidation-initiated pinacol-like rearrangement catalyzed by the notB' FAD-dependent monooxygenase leading to the formation of notoamide C and notoamide D. On the other hand notoamide S is converted to notoamide T by notH' (or notD'), a bifunctional oxidase that also functions as the intramolecular Diels-Alderase responsible for generation of (-)-notoamide T. To generate antipodal (+)-notoaminide T, notH (or notD) in Aspergillus strain MF297-2 is expected to catalyze a Diels-Alder reaction leading to the opposite stereochemistry. The remaining oxidoreductase notD' (or notH') likely catalyzes the oxidative pyran ring formation to yield (-)-stephacidin A. The FAD-dependent monooxygenase notI' is highly similar to notB' and is predicted to catalyze a similar conversion from (-)-stephacidin A to (+)-notoamide B via the 2,3-epoxidation of (-)-stephacidin A followed by a pinacol-type rearrangement. Finally, it remains unclear which enzyme could be responsible for the final hydroxylation steps leading to notoamide A and sclerotiamide. The function of notN' in the notoamide biosynthesis has not been determined yet. This chain is Notoamide biosynthesis cluster protein N', found in Aspergillus versicolor.